We begin with the raw amino-acid sequence, 510 residues long: NAD(P)H-quinone oxidoreductase subunit 2 A, chloroplastic (510 aa).

A run of 12 helical transmembrane segments spans residues 24 to 44, 59 to 79, 99 to 119, 124 to 144, 149 to 169, 183 to 203, 229 to 249, 295 to 315, 323 to 343, 354 to 374, 395 to 415, and 418 to 438; these read LLLF…GLIL, WFYF…LFRW, IFQF…VEYI, MAIT…MFLC, LITI…LSGY, YLLM…WLYG, ISLA…PAPF, WHLL…LLAI, MLAY…IVGD, YMLF…LFGL, ALSL…AGFF, and LYLF…IGLL.

Belongs to the complex I subunit 2 family. In terms of assembly, NDH is composed of at least 16 different subunits, 5 of which are encoded in the nucleus.

Its subcellular location is the plastid. The protein resides in the chloroplast thylakoid membrane. It catalyses the reaction a plastoquinone + NADH + (n+1) H(+)(in) = a plastoquinol + NAD(+) + n H(+)(out). The enzyme catalyses a plastoquinone + NADPH + (n+1) H(+)(in) = a plastoquinol + NADP(+) + n H(+)(out). In terms of biological role, NDH shuttles electrons from NAD(P)H:plastoquinone, via FMN and iron-sulfur (Fe-S) centers, to quinones in the photosynthetic chain and possibly in a chloroplast respiratory chain. The immediate electron acceptor for the enzyme in this species is believed to be plastoquinone. Couples the redox reaction to proton translocation, and thus conserves the redox energy in a proton gradient. This chain is NAD(P)H-quinone oxidoreductase subunit 2 A, chloroplastic, found in Triticum aestivum (Wheat).